We begin with the raw amino-acid sequence, 980 residues long: MDDLEQAILLASDSPAAAAASPAVRAEALAYCARARDETPPSSLLHLCLYGLASSPHAHVHFWCLQTIHDALLLRRRLALPDDLALLRSSLLSLAVSSNAASPPFLRNKLAQLLALLVRFEYPHVYPSYFLDLIPPSPPLPGPTDMFARVLVSLDDDLLSQDYPRNAEEASDAGRVKDAMRAQCVPQIARHWHEAAVSLRAADPAVAAVALDAARRCISWIDVSLVANDVFVPLLFDIALSPGSVAPLAAAAVGCLSAVAAKRMDARAKVALLRSLMSAQKGFGSPDSGLKMAHLVTAYAVEALECYRKLGSSDADGAAALEMLEEVLPAVFAAAESGDDDEVDSGSVLEFLSGYVSTMKAPTEKQLGHLGQILEVVRMQMSYDPVYRGHLDVLDKIGKEEEDLMAEQRKDLIALFRSICRVAPGATQLFIRGLLVTALSSAEVSVEDVEVALTLFYRLGEIVGEEEIRTGAGLIRELVPMLLSARFSCHTHRLVALVYLDTISRYIKFMQENDQYVPHLLTVFLDERGIHHQNAHVSCHAGYLLMRAIRLLKAKLVPYLDTILQSLQDALVQFTATDWANKDIKFSSSEDGSQIFEAVGLLIGIEEVSPDKQVQCLTALLNPLCQQIESLVMDAKAQGLEESSPRAIGLQQIIVALTMISKGFNERLVMGSRPTLGVMFKKTLDVVLQVLISFPNVKPLRSKIISFLHRMVEILGISVLPCIPIALRQLLVDNEAKDMSEFLYLINQIICKFKSSANALLEDVFPAIASHLSVILSHDAFSNGFASNTEEMRELQELEKRFYAFLLHIATHDLSTVLLTPSCRHYLENIMQLLLITSCSHKEISHRKTCVQTFVNLIKDWCSSSEIEDKLPGFRVFMIEKFATGCCLQSVLDKSFNFRDGISIALFGEIMMAQKVMYERFGENFVVNFVTKLREAHCPPDLAEQYYQKLQGNDIKAFKSFYESLVMKIRQQQNGSLVFR.

Belongs to the exportin family. Expressed in roots, stems, leaves, flowers and embryos.

The protein resides in the nucleus. It is found in the cytoplasm. In terms of biological role, probable tRNA nucleus export receptor which regulates tRNA processing and facilitates tRNA translocation across the nuclear pore complex. Is required for correct leaf initiation at different developmental stages and may play a role in floral patterning. The chain is Exportin-T from Oryza sativa subsp. japonica (Rice).